The primary structure comprises 523 residues: uncharacterized protein (523 aa).

This is an uncharacterized protein from Saccharomyces cerevisiae (strain ATCC 204508 / S288c) (Baker's yeast).